The following is a 209-amino-acid chain: Nucleoside triphosphate pyrophosphatase (209 aa).

Asp79 (proton acceptor) is an active-site residue.

It belongs to the Maf family. Requires a divalent metal cation as cofactor.

The protein resides in the cytoplasm. It catalyses the reaction a ribonucleoside 5'-triphosphate + H2O = a ribonucleoside 5'-phosphate + diphosphate + H(+). The catalysed reaction is a 2'-deoxyribonucleoside 5'-triphosphate + H2O = a 2'-deoxyribonucleoside 5'-phosphate + diphosphate + H(+). Functionally, nucleoside triphosphate pyrophosphatase. May have a dual role in cell division arrest and in preventing the incorporation of modified nucleotides into cellular nucleic acids. In Mycolicibacterium vanbaalenii (strain DSM 7251 / JCM 13017 / BCRC 16820 / KCTC 9966 / NRRL B-24157 / PYR-1) (Mycobacterium vanbaalenii), this protein is Nucleoside triphosphate pyrophosphatase.